Consider the following 273-residue polypeptide: MHHDPNPFDEGNADDNPFSNGGGGGGGGGSRQQYGFRPTEPAGFGAGRGDATVDVPLDTMGDSKSKARELSSWETDLKRREADIKRREEALRNAGVPMEDKNWPPFFPIIHHDIANEIPANLQKLQYLAFASWLGIVLCLSWNFIAVIVCWIKEGDSKLFFLATIYALLGIPLSYLIWYRPLYRAMRTNSAFSFGWFFLCYLIHIGFCIIAAIAPPIVFHGKSLTGILAAIDTFSEHVIIGIFYFVGFALFCLETLLSIGVLQRVYMYFRGNK.

The tract at residues 1–69 (MHHDPNPFDE…MGDSKSKARE (69 aa)) is disordered. At 1 to 131 (MHHDPNPFDE…LQKLQYLAFA (131 aa)) the chain is on the cytoplasmic side. Over residues 20–30 (NGGGGGGGGGS) the composition is skewed to gly residues. Positions 68-94 (RELSSWETDLKRREADIKRREEALRNA) form a coiled coil. The next 4 helical transmembrane spans lie at 132–152 (SWLG…VCWI), 159–179 (LFFL…LIWY), 194–214 (FGWF…AAIA), and 239–259 (IIGI…LLSI). Residues 260-273 (GVLQRVYMYFRGNK) are Cytoplasmic-facing.

It belongs to the SCAMP family.

Its subcellular location is the cell membrane. The protein resides in the cytoplasmic vesicle. It is found in the secretory vesicle membrane. In terms of biological role, probably involved in membrane trafficking. The protein is Secretory carrier-associated membrane protein 6 (SCAMP6) of Oryza sativa subsp. japonica (Rice).